A 373-amino-acid chain; its full sequence is 4-hydroxy-3-methylbut-2-en-1-yl diphosphate synthase (flavodoxin) (373 aa).

The [4Fe-4S] cluster site is built by C270, C273, C305, and E312.

Belongs to the IspG family. The cofactor is [4Fe-4S] cluster.

The catalysed reaction is (2E)-4-hydroxy-3-methylbut-2-enyl diphosphate + oxidized [flavodoxin] + H2O + 2 H(+) = 2-C-methyl-D-erythritol 2,4-cyclic diphosphate + reduced [flavodoxin]. The protein operates within isoprenoid biosynthesis; isopentenyl diphosphate biosynthesis via DXP pathway; isopentenyl diphosphate from 1-deoxy-D-xylulose 5-phosphate: step 5/6. Its function is as follows. Converts 2C-methyl-D-erythritol 2,4-cyclodiphosphate (ME-2,4cPP) into 1-hydroxy-2-methyl-2-(E)-butenyl 4-diphosphate. The sequence is that of 4-hydroxy-3-methylbut-2-en-1-yl diphosphate synthase (flavodoxin) from Pectobacterium carotovorum subsp. carotovorum (strain PC1).